Here is a 202-residue protein sequence, read N- to C-terminus: Ribonuclease HII (202 aa).

Residues 15–202 form the RNase H type-2 domain; sequence QGVAGVDEAG…APIKAFGISA (188 aa). A divalent metal cation-binding residues include D21, E22, and D113.

Belongs to the RNase HII family. Mn(2+) is required as a cofactor. It depends on Mg(2+) as a cofactor.

The protein localises to the cytoplasm. It carries out the reaction Endonucleolytic cleavage to 5'-phosphomonoester.. Functionally, endonuclease that specifically degrades the RNA of RNA-DNA hybrids. The protein is Ribonuclease HII of Bordetella avium (strain 197N).